The sequence spans 88 residues: Protein transport protein Sec61 subunit beta (88 aa).

A disordered region spans residues 1–41 (MDSSVPGGQRTLQKRRNAQLQKEKKANQTPASPRQAGFGGS). Topologically, residues 1 to 60 (MDSSVPGGQRTLQKRRNAQLQKEKKANQTPASPRQAGFGGSSSSILKLYTDEANGLRVDP) are cytoplasmic. A helical transmembrane segment spans residues 61-81 (LVVLFLAVAFVFSVVALHVVA).

Belongs to the SEC61-beta family. Heterotrimeric complex composed of SEC61, SEB1 and SSS1.

The protein localises to the endoplasmic reticulum membrane. Necessary for protein translocation in the endoplasmic reticulum. The sequence is that of Protein transport protein Sec61 subunit beta (SBH1) from Kluyveromyces lactis (strain ATCC 8585 / CBS 2359 / DSM 70799 / NBRC 1267 / NRRL Y-1140 / WM37) (Yeast).